The following is a 120-amino-acid chain: Large ribosomal subunit protein uL24 (120 aa).

A disordered region spans residues 1–26 (MSKQPDKQRKSQRRAPLHERHKQVRA). A compositionally biased stretch (basic residues) spans 10 to 24 (KSQRRAPLHERHKQV).

It belongs to the universal ribosomal protein uL24 family. As to quaternary structure, part of the 50S ribosomal subunit. Interacts weakly with protein L4.

Functionally, one of two assembly initiator proteins, it binds directly to the 5'-end of the 23S rRNA, where it nucleates assembly of the 50S subunit. In terms of biological role, stabilizes the tertiary rRNA structure within the 23S rRNA domain (domain I) to which it binds. Located at the polypeptide exit tunnel on the outside of the subunit. The protein is Large ribosomal subunit protein uL24 (rpl24) of Haloarcula marismortui (strain ATCC 43049 / DSM 3752 / JCM 8966 / VKM B-1809) (Halobacterium marismortui).